Consider the following 334-residue polypeptide: Fructose-1,6-bisphosphatase class 1 (334 aa).

Positions 91, 113, 115, and 116 each coordinate Mg(2+). Substrate contacts are provided by residues 116–119 (DGSS), Asn-208, and Lys-274. Residue Glu-280 participates in Mg(2+) binding.

Belongs to the FBPase class 1 family. As to quaternary structure, homotetramer. It depends on Mg(2+) as a cofactor.

Its subcellular location is the cytoplasm. It catalyses the reaction beta-D-fructose 1,6-bisphosphate + H2O = beta-D-fructose 6-phosphate + phosphate. It functions in the pathway carbohydrate biosynthesis; gluconeogenesis. This chain is Fructose-1,6-bisphosphatase class 1, found in Herminiimonas arsenicoxydans.